The primary structure comprises 113 residues: Nucleoid-associated protein Athe_1143 (113 aa).

Belongs to the YbaB/EbfC family. As to quaternary structure, homodimer.

It localises to the cytoplasm. Its subcellular location is the nucleoid. In terms of biological role, binds to DNA and alters its conformation. May be involved in regulation of gene expression, nucleoid organization and DNA protection. The sequence is that of Nucleoid-associated protein Athe_1143 from Caldicellulosiruptor bescii (strain ATCC BAA-1888 / DSM 6725 / KCTC 15123 / Z-1320) (Anaerocellum thermophilum).